The primary structure comprises 269 residues: Interleukin-1 beta (269 aa).

The propeptide occupies Met1–Asp116.

The protein belongs to the IL-1 family. In terms of assembly, monomer. In its precursor form, weakly interacts with full-length MEFV; the mature cytokine does not interact at all. Interacts with integrins ITGAV:ITGBV and ITGA5:ITGB1; integrin-binding is required for IL1B signaling. Interacts with cargo receptor TMED10; the interaction is direct and is required for the secretion of IL1B mature form. Interacts with HSP90AB1; the interaction facilitates cargo translocation into the ERGIC. Interacts with HSP90B1; the interaction facilitates cargo translocation into the ERGIC.

It localises to the cytoplasm. The protein resides in the cytosol. The protein localises to the secreted. It is found in the lysosome. Its subcellular location is the extracellular exosome. Potent pro-inflammatory cytokine. Initially discovered as the major endogenous pyrogen, induces prostaglandin synthesis, neutrophil influx and activation, T-cell activation and cytokine production, B-cell activation and antibody production, and fibroblast proliferation and collagen production. Promotes Th17 differentiation of T-cells. Synergizes with IL12/interleukin-12 to induce IFNG synthesis from T-helper 1 (Th1) cells. Plays a role in angiogenesis by inducing VEGF production synergistically with TNF and IL6. Involved in transduction of inflammation downstream of pyroptosis: its mature form is specifically released in the extracellular milieu by passing through the gasdermin-D (GSDMD) pore. In Macaca mulatta (Rhesus macaque), this protein is Interleukin-1 beta (IL1B).